The chain runs to 341 residues: Sulfate/thiosulfate import ATP-binding protein CysA 2 (341 aa).

The ABC transporter domain maps to 3 to 235 (IRLENVVKTF…PNSSFVMRFL (233 aa)). Residue 35 to 42 (GPSGSGKT) participates in ATP binding.

It belongs to the ABC transporter superfamily. Sulfate/tungstate importer (TC 3.A.1.6) family. The complex is composed of two ATP-binding proteins (CysA), two transmembrane proteins (CysT and CysW) and a solute-binding protein (CysP).

The protein resides in the cell inner membrane. The enzyme catalyses sulfate(out) + ATP + H2O = sulfate(in) + ADP + phosphate + H(+). The catalysed reaction is thiosulfate(out) + ATP + H2O = thiosulfate(in) + ADP + phosphate + H(+). Part of the ABC transporter complex CysAWTP involved in sulfate/thiosulfate import. Responsible for energy coupling to the transport system. This chain is Sulfate/thiosulfate import ATP-binding protein CysA 2, found in Agrobacterium fabrum (strain C58 / ATCC 33970) (Agrobacterium tumefaciens (strain C58)).